The sequence spans 370 residues: Mesoderm posterior protein 2 (370 aa).

3 disordered regions span residues 51 to 89 (PSQPAGPARSTRTTQATAPRRTRPAPAGGQRQSASEREK), 231 to 265 (SLERAADSSPWAPPQACPGMQMSPEPRNKTGHWTQ), and 325 to 350 (TSEDQGSSPALQLPVASPTPSSGLQL). Low complexity predominate over residues 57–77 (PARSTRTTQATAPRRTRPAPA). Positions 79 to 133 (GQRQSASEREKLRMRTLARALQELRRFLPPSVAPAGQSLTKIETLRLAIRYIGHL) constitute a bHLH domain. The span at 325–334 (TSEDQGSSPA) shows a compositional bias: polar residues. Positions 326–330 (SEDQG) are may contain a degradation domain.

Degraded by the proteasome. Post-translationally, phosphorylated.

It localises to the nucleus. Functionally, transcription factor with important role in somitogenesis. Defines the rostrocaudal patterning of the somite by participating in distinct Notch pathways. Also regulates the FGF signaling pathway. Specifies the rostral half of the somites. Generates rostro-caudal polarity of somites by down-regulating in the presumptive rostral domain DLL1, a Notch ligand. Participates in the segment border formation by activating in the anterior presomitic mesoderm LFNG, a negative regulator of DLL1-Notch signaling. Acts as a strong suppressor of Notch activity. Together with MESP1 is involved in the epithelialization of somitic mesoderm and in the development of cardiac mesoderm. May play a role with Tcf15 in the differentiation of myotomal and sclerotomal cells by regulating Pax family genes. Also controls the expression of the protocadherin PCDH8/PAPC, EPHA4, RIPPLY2, NOTCH2, FGFR1, and CER1. Binds to the E-boxes within the EPH4A and RIPPLY2 enhancers. The chain is Mesoderm posterior protein 2 (Mesp2) from Mus musculus (Mouse).